Reading from the N-terminus, the 608-residue chain is Elongation factor 4 (608 aa).

The tr-type G domain maps to 11 to 193 (KKIRNFSIIA…QIVEKVPEPS (183 aa)). GTP-binding positions include 23-28 (DHGKST) and 140-143 (NKID).

It belongs to the TRAFAC class translation factor GTPase superfamily. Classic translation factor GTPase family. LepA subfamily.

It localises to the cell membrane. The catalysed reaction is GTP + H2O = GDP + phosphate + H(+). In terms of biological role, required for accurate and efficient protein synthesis under certain stress conditions. May act as a fidelity factor of the translation reaction, by catalyzing a one-codon backward translocation of tRNAs on improperly translocated ribosomes. Back-translocation proceeds from a post-translocation (POST) complex to a pre-translocation (PRE) complex, thus giving elongation factor G a second chance to translocate the tRNAs correctly. Binds to ribosomes in a GTP-dependent manner. The chain is Elongation factor 4 from Listeria innocua serovar 6a (strain ATCC BAA-680 / CLIP 11262).